The sequence spans 404 residues: Sialidase (404 aa).

Residues 1–27 (MKKFIKILKVLSMAIVLSACNINGIFA) form the signal peptide. R55 contacts substrate. The active-site Proton acceptor is the D80. 3 BNR repeats span residues 89–100 (AKSTDNGQTWDY), 158–169 (VYSDDNGETWSD), and 226–237 (IYSKDNGETWTM). Position 263 (R263) interacts with substrate. The stretch at 273-284 (YISYDMGSTWEV) is one BNR 4 repeat. The active-site Nucleophile is the Y365.

It belongs to the glycosyl hydrolase 33 family. It is possible that the sialidase is cleaved in front of a cysteine within the leader peptide, forming a glyceride thioether bond which links the protein to the membrane. A second proteolytic cleavage releases the mature extracellular protein.

Its subcellular location is the secreted. It carries out the reaction Hydrolysis of alpha-(2-&gt;3)-, alpha-(2-&gt;6)-, alpha-(2-&gt;8)- glycosidic linkages of terminal sialic acid residues in oligosaccharides, glycoproteins, glycolipids, colominic acid and synthetic substrates.. In terms of biological role, sialidases have been suggested to be pathogenic factors in microbial infections. This is Sialidase from Paraclostridium sordellii (Clostridium sordellii).